Reading from the N-terminus, the 433-residue chain is MNKNIVILGTQWGDEGKGKVVDCLTKDSSYVVRYQGGHNAGHTLVVNDKKIILHLIPSGLLHKNVIGIIANGVVVSPFELIKEIKMLETHNIFVHKRLFISNSSPLILQYHIEMDIAREKKLGISALGTTGRGIGPAYEDKIARRALRIGDLKNEKTLSIRLEKIVNYYNHQLVSFYKHKPVDYKIILRDLLPTIDLIYDMIKDTTSILHTAIQSNKKIIFEGAQGSFLDIDHGTYPYVTSSNSTIGGVITGTGVGSKSLDYILGVTKAYSTRVGYGPFPTELFDDVDKHFSKKGHEFGSTTGRKRRTGWLDAVALCRSVRINSLSGLCITKLDVLDGLYEIKICTAYKNINTLEIISFPDIDEWKNIEPIYETYPGWNKKTLGIKKLIDLPYEARNYINRIEEITQIPVDIISTGPDRSDIIFVRDIFFIKK.

GTP contacts are provided by residues 13–19 (GDEGKGK) and 41–43 (GHT). The active-site Proton acceptor is Asp14. Mg(2+) contacts are provided by Asp14 and Gly41. IMP contacts are provided by residues 14-17 (DEGK), 39-42 (NAGH), Thr130, Arg144, Gln225, Thr240, and Arg304. His42 functions as the Proton donor in the catalytic mechanism. Residue 300–306 (STTGRKR) participates in substrate binding. GTP-binding positions include Arg306, 332 to 334 (KLD), and 414 to 416 (STG).

Belongs to the adenylosuccinate synthetase family. In terms of assembly, homodimer. Mg(2+) serves as cofactor.

Its subcellular location is the cytoplasm. The catalysed reaction is IMP + L-aspartate + GTP = N(6)-(1,2-dicarboxyethyl)-AMP + GDP + phosphate + 2 H(+). The protein operates within purine metabolism; AMP biosynthesis via de novo pathway; AMP from IMP: step 1/2. Plays an important role in the de novo pathway of purine nucleotide biosynthesis. Catalyzes the first committed step in the biosynthesis of AMP from IMP. This Buchnera aphidicola subsp. Acyrthosiphon pisum (strain Tuc7) protein is Adenylosuccinate synthetase.